Reading from the N-terminus, the 215-residue chain is Cytochrome b6 (215 aa).

A helical membrane pass occupies residues 32-52; sequence IFYCLGGITLVCFLIQFATGF. Heme c is bound at residue cysteine 35. Heme b-binding residues include histidine 86 and histidine 100. Helical transmembrane passes span 90–110, 116–136, and 186–206; these read ASMM…TGGF, LTWV…VTGY, and LHTF…FLMI. Heme b contacts are provided by histidine 187 and histidine 202.

It belongs to the cytochrome b family. PetB subfamily. As to quaternary structure, the 4 large subunits of the cytochrome b6-f complex are cytochrome b6, subunit IV (17 kDa polypeptide, PetD), cytochrome f and the Rieske protein, while the 4 small subunits are PetG, PetL, PetM and PetN. The complex functions as a dimer. Requires heme b as cofactor. The cofactor is heme c.

The protein resides in the cellular thylakoid membrane. In terms of biological role, component of the cytochrome b6-f complex, which mediates electron transfer between photosystem II (PSII) and photosystem I (PSI), cyclic electron flow around PSI, and state transitions. The protein is Cytochrome b6 of Synechococcus sp. (strain JA-3-3Ab) (Cyanobacteria bacterium Yellowstone A-Prime).